The primary structure comprises 514 residues: GMP synthase [glutamine-hydrolyzing] (514 aa).

The Glutamine amidotransferase type-1 domain occupies 7–197; that stretch reads KVLILDFGSQ…LFNICKCERN (191 aa). Cys-84 functions as the Nucleophile in the catalytic mechanism. Catalysis depends on residues His-171 and Glu-173. The GMPS ATP-PPase domain occupies 198–389; the sequence is WNMGSFIEYE…LKLPEDIVYR (192 aa). ATP is bound at residue 225–231; it reads SGGVDSS.

Homodimer.

It catalyses the reaction XMP + L-glutamine + ATP + H2O = GMP + L-glutamate + AMP + diphosphate + 2 H(+). Its pathway is purine metabolism; GMP biosynthesis; GMP from XMP (L-Gln route): step 1/1. Catalyzes the synthesis of GMP from XMP. In Brachyspira hyodysenteriae (strain ATCC 49526 / WA1), this protein is GMP synthase [glutamine-hydrolyzing].